We begin with the raw amino-acid sequence, 424 residues long: Cuticlin-1 (424 aa).

Residues 1-18 form the signal peptide; sequence MTWKPIICLAALVLSASA. Residues 19–392 lie on the Extracellular side of the membrane; that stretch reads IPVDNNVEGE…ATSTGICLTP (374 aa). The ZP domain maps to 32–277; the sequence is ECGPNSITVN…PTCSEPQGFG (246 aa). Cysteines 197 and 252 form a disulfide. 4 repeat units span residues 302–305, 307–311, 312–315, and 320–323. The interval 302 to 323 is 4 X 4 AA repeats of A-A-P-[AVI]; it reads AAPVAAAAPVAAPVAAAAAAPA. Residues 393 to 413 form a helical membrane-spanning segment; that stretch reads IGFASFLGIGTIVATALSATI. Topologically, residues 414–424 are cytoplasmic; the sequence is FYVARPTSHKH.

The protein localises to the cell membrane. It is found in the secreted. In terms of biological role, component of the cuticles, which contributes to the formation of extracellular envelopes protecting the organism from the environment. Plays a role in alae formation in dauer larvae. This chain is Cuticlin-1, found in Caenorhabditis elegans.